Reading from the N-terminus, the 424-residue chain is UDP-sugar transporter protein SLC35A5 (424 aa).

At 1–8 (MEKQCCSH) the chain is on the cytoplasmic side. Residues 9-29 (PVICSLSTMYTFLLGAIFIAL) form a helical membrane-spanning segment. The Lumenal portion of the chain corresponds to 30–53 (SSSRILLVKYSANEENKYDYLPTT). A helical membrane pass occupies residues 54-74 (VNVCSELVKLVFCVLVSFCVI). The Cytoplasmic portion of the chain corresponds to 75-93 (KKDHQSRNLKYASWKEFSD). The helical transmembrane segment at 94-116 (FMKWSIPAFLYFLDNLIVFYVLS) threads the bilayer. The Lumenal segment spans residues 117 to 119 (YLQ). Residues 120 to 142 (PAMAVIFSNFSIITTALLFRIVL) form a helical membrane-spanning segment. The Cytoplasmic segment spans residues 143–147 (KRRLN). The helical transmembrane segment at 148 to 168 (WIQWASLLTLFLSIVALTAGT) threads the bilayer. Over 169–228 (KTLQHNLAGRGFHHDAFFSPSNSCLLFRSECPRKDNCTAKEWTFPEAKWNTTARVFSHIR) the chain is Lumenal. The N-linked (GlcNAc...) asparagine glycan is linked to Asn204. A helical membrane pass occupies residues 229–249 (LGMGHVLIIVQCFISSMANIY). The Cytoplasmic segment spans residues 250–263 (NEKILKEGNQLTES). The helical transmembrane segment at 264-284 (IFIQNSKLYFFGILFNGLTLG) threads the bilayer. At 285 to 303 (LQRSNRDQIKNCGFFYGHS) the chain is on the lumenal side. The chain crosses the membrane as a helical span at residues 304-324 (AFSVALIFVTAFQGLSVAFIL). The Cytoplasmic segment spans residues 325–330 (KFLDNM). Residues 331-351 (FHVLMAQVTTVIITTVSVLVF) traverse the membrane as a helical segment. Over 352 to 354 (DFR) the chain is Lumenal. A helical transmembrane segment spans residues 355–375 (PSLEFFLEAPSVLLSIFIYNA). The Cytoplasmic segment spans residues 376–424 (SKPQVPEYAPRQERIRDLSGNLWERSSGDGEELERLTKPKSDESDEDTF). Residues Ser394, Ser416, and Ser419 each carry the phosphoserine modification. Positions 397–424 (LWERSSGDGEELERLTKPKSDESDEDTF) are disordered. The span at 408 to 417 (LERLTKPKSD) shows a compositional bias: basic and acidic residues.

Belongs to the nucleotide-sugar transporter family. SLC35A subfamily. In terms of assembly, probably forms homooligomers and heterooligomers with SLC35A1, SLC35A2, SLC35A3 and SLC35A4.

It localises to the golgi apparatus membrane. It catalyses the reaction UMP(out) + UDP-alpha-D-glucuronate(in) = UMP(in) + UDP-alpha-D-glucuronate(out). The catalysed reaction is UMP(out) + UDP-N-acetyl-alpha-D-glucosamine(in) = UMP(in) + UDP-N-acetyl-alpha-D-glucosamine(out). The enzyme catalyses UDP-N-acetyl-alpha-D-galactosamine(in) + UMP(out) = UDP-N-acetyl-alpha-D-galactosamine(out) + UMP(in). In terms of biological role, probable UDP-sugar:UMP transmembrane antiporter involved in UDP-alpha-D-glucuronate/UDP-GlcA, UDP-GlcNAc/UDP-N-acetyl-alpha-D-glucosamine and UDP-N-acetyl-alpha-D-galactosamine/UDP-GalNAc transport from the cytosol to the lumen of the Golgi. This Homo sapiens (Human) protein is UDP-sugar transporter protein SLC35A5.